The sequence spans 27 residues: Protamine-A (27 aa).

Positions 1–27 are disordered; it reads ARRRRRHASTKLKRRRRRRRHGKKSHK.

Testis.

It localises to the nucleus. The protein localises to the chromosome. In terms of biological role, protamines substitute for histones in the chromatin of sperm during the haploid phase of spermatogenesis. They compact sperm DNA into a highly condensed, stable and inactive complex. In Acipenser stellatus (Sevruga), this protein is Protamine-A.